Reading from the N-terminus, the 56-residue chain is Large ribosomal subunit protein bL32 (56 aa).

Residues 1 to 38 (MAVQQNKKSRSRRDMRRSHDALTTAAVSVDKTSGETHL) form a disordered region. Residues 7 to 16 (KKSRSRRDMR) show a composition bias toward basic residues.

It belongs to the bacterial ribosomal protein bL32 family.

The protein is Large ribosomal subunit protein bL32 of Histophilus somni (strain 129Pt) (Haemophilus somnus).